The sequence spans 596 residues: Aspartate--tRNA(Asp/Asn) ligase (596 aa).

Glu173 is an L-aspartate binding site. The tract at residues 197-200 (QLFK) is aspartate. An L-aspartate-binding site is contributed by Arg219. ATP-binding positions include 219 to 221 (RDE) and Gln228. L-aspartate is bound at residue His450. Residue Glu485 participates in ATP binding. Arg492 lines the L-aspartate pocket. Position 537-540 (537-540 (GLDR)) interacts with ATP.

It belongs to the class-II aminoacyl-tRNA synthetase family. Type 1 subfamily. As to quaternary structure, homodimer.

The protein localises to the cytoplasm. The enzyme catalyses tRNA(Asx) + L-aspartate + ATP = L-aspartyl-tRNA(Asx) + AMP + diphosphate. In terms of biological role, aspartyl-tRNA synthetase with relaxed tRNA specificity since it is able to aspartylate not only its cognate tRNA(Asp) but also tRNA(Asn). Reaction proceeds in two steps: L-aspartate is first activated by ATP to form Asp-AMP and then transferred to the acceptor end of tRNA(Asp/Asn). The sequence is that of Aspartate--tRNA(Asp/Asn) ligase from Hydrogenovibrio crunogenus (strain DSM 25203 / XCL-2) (Thiomicrospira crunogena).